The chain runs to 200 residues: Glycerol-3-phosphate acyltransferase (200 aa).

4 helical membrane passes run 4 to 24 (ALLA…YWVG), 70 to 90 (ALGS…FAVI), 110 to 130 (LGIL…VWLL), and 158 to 178 (QPLP…GAHR).

The protein belongs to the PlsY family. Probably interacts with PlsX.

It is found in the cell inner membrane. The enzyme catalyses an acyl phosphate + sn-glycerol 3-phosphate = a 1-acyl-sn-glycero-3-phosphate + phosphate. Its pathway is lipid metabolism; phospholipid metabolism. Its function is as follows. Catalyzes the transfer of an acyl group from acyl-phosphate (acyl-PO(4)) to glycerol-3-phosphate (G3P) to form lysophosphatidic acid (LPA). This enzyme utilizes acyl-phosphate as fatty acyl donor, but not acyl-CoA or acyl-ACP. In Synechococcus sp. (strain JA-2-3B'a(2-13)) (Cyanobacteria bacterium Yellowstone B-Prime), this protein is Glycerol-3-phosphate acyltransferase.